We begin with the raw amino-acid sequence, 396 residues long: S-adenosylmethionine synthase (396 aa).

H15 provides a ligand contact to ATP. A Mg(2+)-binding site is contributed by D17. Residue E43 participates in K(+) binding. L-methionine is bound by residues E56 and Q99. The segment at 99–109 (QSSDIAQGVDR) is flexible loop. ATP-binding positions include 175-177 (DGK), 241-242 (RF), D250, 256-257 (RK), S273, and K277. D250 serves as a coordination point for L-methionine. K281 is a binding site for L-methionine.

Belongs to the AdoMet synthase family. As to quaternary structure, homotetramer; dimer of dimers. It depends on Mg(2+) as a cofactor. The cofactor is K(+).

The protein resides in the cytoplasm. The catalysed reaction is L-methionine + ATP + H2O = S-adenosyl-L-methionine + phosphate + diphosphate. It participates in amino-acid biosynthesis; S-adenosyl-L-methionine biosynthesis; S-adenosyl-L-methionine from L-methionine: step 1/1. Catalyzes the formation of S-adenosylmethionine (AdoMet) from methionine and ATP. The overall synthetic reaction is composed of two sequential steps, AdoMet formation and the subsequent tripolyphosphate hydrolysis which occurs prior to release of AdoMet from the enzyme. The chain is S-adenosylmethionine synthase from Pelotomaculum thermopropionicum (strain DSM 13744 / JCM 10971 / SI).